The following is a 267-amino-acid chain: Glutamate racemase (267 aa).

Residues 10 to 11 and 42 to 43 contribute to the substrate site; these read DS and YG. Catalysis depends on C73, which acts as the Proton donor/acceptor. Substrate is bound at residue 74–75; the sequence is NT. C183 acts as the Proton donor/acceptor in catalysis. 184 to 185 is a substrate binding site; that stretch reads TH.

The protein belongs to the aspartate/glutamate racemases family.

The catalysed reaction is L-glutamate = D-glutamate. The protein operates within cell wall biogenesis; peptidoglycan biosynthesis. In terms of biological role, provides the (R)-glutamate required for cell wall biosynthesis. The polypeptide is Glutamate racemase (Lactobacillus helveticus (strain DPC 4571)).